A 433-amino-acid polypeptide reads, in one-letter code: Homogentisate 1,2-dioxygenase (433 aa).

The active-site Proton acceptor is His-288. His-331 and Glu-337 together coordinate Fe cation. Homogentisate contacts are provided by Tyr-346 and His-367. A Fe cation-binding site is contributed by His-367.

It belongs to the homogentisate dioxygenase family. Hexamer; dimer of trimers. Requires Fe cation as cofactor.

The enzyme catalyses homogentisate + O2 = 4-maleylacetoacetate + H(+). Its pathway is amino-acid degradation; L-phenylalanine degradation; acetoacetate and fumarate from L-phenylalanine: step 4/6. Involved in the catabolism of homogentisate (2,5-dihydroxyphenylacetate or 2,5-OH-PhAc), a central intermediate in the degradation of phenylalanine and tyrosine. Catalyzes the oxidative ring cleavage of the aromatic ring of homogentisate to yield maleylacetoacetate. This Pseudomonas entomophila (strain L48) protein is Homogentisate 1,2-dioxygenase.